We begin with the raw amino-acid sequence, 85 residues long: Small ribosomal subunit protein bS20 (85 aa).

The protein belongs to the bacterial ribosomal protein bS20 family.

Functionally, binds directly to 16S ribosomal RNA. The chain is Small ribosomal subunit protein bS20 from Cytophaga hutchinsonii (strain ATCC 33406 / DSM 1761 / CIP 103989 / NBRC 15051 / NCIMB 9469 / D465).